Here is a 317-residue protein sequence, read N- to C-terminus: Probable cell division protein WhiA (317 aa).

The H-T-H motif DNA-binding region spans 281–314 (SLKELGKMLEPPVGKSGVNHRLRKIEKIAEELRK).

It belongs to the WhiA family.

In terms of biological role, involved in cell division and chromosome segregation. The protein is Probable cell division protein WhiA of Clostridium acetobutylicum (strain ATCC 824 / DSM 792 / JCM 1419 / IAM 19013 / LMG 5710 / NBRC 13948 / NRRL B-527 / VKM B-1787 / 2291 / W).